The chain runs to 558 residues: Phosphatidylserine lipase ABHD16A (558 aa).

The next 2 membrane-spanning stretches (helical) occupy residues 60–80 and 93–113; these read ILALASVFWSISYYSSPFAFF and VVPFSHYAGTLLLLLAGVACL. At 114–558 the chain is on the cytoplasmic side; the sequence is RGIGRWTNPQ…AQNFQMPWHL (445 aa). One can recognise an AB hydrolase-1 domain in the interval 281–407; sequence LVICCEGNAG…LVTRTVRQHL (127 aa). Residues Ser-355, Asp-430, and His-507 each act as charge relay system in the active site.

The protein belongs to the AB hydrolase superfamily. ABHD16 family.

The protein resides in the membrane. It carries out the reaction 1-heptadecanoyl-2-(5Z,8Z,11Z,14Z-eicosatetraenoyl)-sn-glycero-3-phosphoserine + H2O = 1-heptadecanoyl-sn-glycero-3-phosphoserine + (5Z,8Z,11Z,14Z)-eicosatetraenoate + H(+). It catalyses the reaction 1-hexadecanoyl-2-(9Z-octadecenoyl)-sn-glycero-3-phospho-L-serine + H2O = 1-hexadecanoyl-sn-glycero-3-phospho-L-serine + (9Z)-octadecenoate + H(+). The catalysed reaction is 1-octadecanoyl-2-(9Z,12Z-octadecadienoyl)-sn-glycero-3-phosphoserine + H2O = 1-octadecanoyl-sn-glycero-3-phosphoserine + (9Z,12Z)-octadecadienoate + H(+). The enzyme catalyses 1-heptadecanoyl-2-(5Z,8Z,11Z,14Z-eicosatetraenoyl)-sn-glycero-3-phosphocholine + H2O = 1-heptadecanoyl-sn-glycero-3-phosphocholine + (5Z,8Z,11Z,14Z)-eicosatetraenoate + H(+). It carries out the reaction 1-hexadecanoyl-2-(9Z-octadecenoyl)-sn-glycero-3-phosphoglycerol + H2O = 1-hexadecanoyl-sn-glycero-3-phosphoglycerol + (9Z)-octadecenoate + H(+). It catalyses the reaction 1-hexadecanoyl-2-(9Z-octadecenoyl)-sn-glycero-3-phospho-(1D-myo-inositol) + H2O = 1-hexadecanoyl-sn-glycero-3-phospho-(1D-myo-inositol) + (9Z)-octadecenoate + H(+). The catalysed reaction is 1-heptadecanoyl-2-(5Z,8Z,11Z,14Z-eicosatetraenoyl)-sn-glycero-3-phosphoethanolamine + H2O = 1-heptadecanoyl-sn-glycero-3-phosphoethanolamine + (5Z,8Z,11Z,14Z)-eicosatetraenoate + H(+). The enzyme catalyses 1-hexadecanoyl-2-(9Z-octadecenoyl)-sn-glycero-3-phospho-(1'-sn-glycerol) + H2O = 1-hexadecanoyl-sn-glycero-3-phospho-(1'-sn-glycerol) + (9Z)-octadecenoate + H(+). It carries out the reaction Hydrolyzes glycerol monoesters of long-chain fatty acids.. It catalyses the reaction 1-tetradecanoylglycerol + H2O = tetradecanoate + glycerol + H(+). The catalysed reaction is 2-hexadecanoylglycerol + H2O = glycerol + hexadecanoate + H(+). The enzyme catalyses 1-(9Z-octadecenoyl)-glycerol + H2O = glycerol + (9Z)-octadecenoate + H(+). It carries out the reaction 2-(9Z-octadecenoyl)-glycerol + H2O = glycerol + (9Z)-octadecenoate + H(+). It catalyses the reaction 2-(9Z,12Z-octadecadienoyl)-glycerol + H2O = (9Z,12Z)-octadecadienoate + glycerol + H(+). The catalysed reaction is 1-(5Z,8Z,11Z,14Z-eicosatetraenoyl)-glycerol + H2O = glycerol + (5Z,8Z,11Z,14Z)-eicosatetraenoate + H(+). The enzyme catalyses 2-(5Z,8Z,11Z,14Z-eicosatetraenoyl)-glycerol + H2O = glycerol + (5Z,8Z,11Z,14Z)-eicosatetraenoate + H(+). It carries out the reaction prostaglandin D2-1-glycerol ester + H2O = prostaglandin D2 + glycerol + H(+). It catalyses the reaction 2-glyceryl-15-deoxy-Delta(12,14)-prostaglandin J2 + H2O = 15-deoxy-Delta(12,14)-prostaglandin J2 + glycerol + H(+). The catalysed reaction is 1-(9Z,12Z-octadecadienoyl)-glycerol + H2O = (9Z,12Z)-octadecadienoate + glycerol + H(+). Inhibited by beta-lactone-based lipid inhibitors, such as beta-lactone palmostatin-B. Functionally, phosphatidylserine (PS) lipase that mediates the hydrolysis of phosphatidylserine to generate lysophosphatidylserine (LPS). LPS constitutes a class of signaling lipids that regulates immunological and neurological processes. Has no activity towards diacylglycerol, triacylglycerol or lysophosphatidylserine lipase. Also has monoacylglycerol lipase activity, with preference for 1-(9Z,12Z-octadecadienoyl)-glycerol (1-LG) and 2-glyceryl-15-deoxy-Delta(12,14)-prostaglandin J2 (15d-PGJ(2)-G). The protein is Phosphatidylserine lipase ABHD16A of Homo sapiens (Human).